A 286-amino-acid polypeptide reads, in one-letter code: ATP synthase gamma chain (286 aa).

Belongs to the ATPase gamma chain family. F-type ATPases have 2 components, CF(1) - the catalytic core - and CF(0) - the membrane proton channel. CF(1) has five subunits: alpha(3), beta(3), gamma(1), delta(1), epsilon(1). CF(0) has three main subunits: a, b and c.

It localises to the cell inner membrane. Functionally, produces ATP from ADP in the presence of a proton gradient across the membrane. The gamma chain is believed to be important in regulating ATPase activity and the flow of protons through the CF(0) complex. In Teredinibacter turnerae (strain ATCC 39867 / T7901), this protein is ATP synthase gamma chain.